A 621-amino-acid polypeptide reads, in one-letter code: tRNA uridine 5-carboxymethylaminomethyl modification enzyme MnmG (621 aa).

An FAD-binding site is contributed by 9–14; it reads GGGHAG. An NAD(+)-binding site is contributed by 270–284; that stretch reads GPRYCPSIEDKIVKF.

Belongs to the MnmG family. In terms of assembly, homodimer. Heterotetramer of two MnmE and two MnmG subunits. It depends on FAD as a cofactor.

It is found in the cytoplasm. Functionally, NAD-binding protein involved in the addition of a carboxymethylaminomethyl (cmnm) group at the wobble position (U34) of certain tRNAs, forming tRNA-cmnm(5)s(2)U34. This chain is tRNA uridine 5-carboxymethylaminomethyl modification enzyme MnmG, found in Borreliella burgdorferi (strain ATCC 35210 / DSM 4680 / CIP 102532 / B31) (Borrelia burgdorferi).